The sequence spans 387 residues: Protein FAM153B (387 aa).

2 disordered regions span residues 233 to 256 (SYNG…RGDL) and 327 to 374 (TITG…KKSR). Residues 336 to 345 (SASPSSAPAE) show a composition bias toward low complexity. Residues 347–359 (ATEKTKVEEEVKT) are compositionally biased toward basic and acidic residues. Over residues 360 to 374 (RKPKKKTRKPSKKSR) the composition is skewed to basic residues.

Belongs to the FAM153 family.

The protein is Protein FAM153B (FAM153B) of Homo sapiens (Human).